A 790-amino-acid chain; its full sequence is MGTRKKVHAFVRVKPTDDFAHEMIRYGDDKRSIDIHLKKDIRRGVVNNQQTDWSFKLDGVLHDASQDLVYETVAKDVVSQALDGYNGTIMCYGQTGAGKTYTMMGATENYKHRGILPRALQQVFRMIEERPTHAITVRVSYLEIYNESLFDLLSTLPYVGPSVTPMTIVENPQGVFIKGLSVHLTSQEEDAFSLLFEGETNRIIASHTMNKNSSRSHCIFTIYLEAHSRTLSEEKYITSKINLVDLAGSERLGKSGSEGQVLKEATYINKSLSFLEQAIIALGDQKRDHIPFRQCKLTHALKDSLGGNCNMVLVTNIYGEAAQLEETLSSLRFASRMKLVTTEPAINEKYDAERMVKNLEKELALLKQELAIHDSLTNRTFVTYDPMDEIQIAEINSQVRRYLEGTLDEIDIISLRQIKEVFNQFRVVLSQQEQEVESTLRRKYTLIDRNDFAAISAIQKAGLVDVDGHLVGEPEGQNFGLGVAPFSTKPGKKAKSKKTFKEPLSSLARKEGASSPVNGKDLDYVSTSKTQLVPSSKDGDVKDMLSRDRETSSIEPLPSDSPKEELRPIRPDTPPSKPVAFEEFKNEQGSEINRIFKENKSILNERRKRASETTQHINAIKREIDVTKEALNFQKSLREKQGKYENKGLMIIDEEEFLLILKLKDLKKQYRSEYQDLRDLRAEIQYCQHLVDQCRHRLLMEFDIWYNESFVIPEDMQMALKPGGSIRPGMVPVNRIVSLGEDDQDKFSQLQQRVLPEGPDSISFYNAKVKIEQKHNYLKTMMGLQQAHRK.

The region spanning Lys-6–Val-340 is the Kinesin motor domain. ATP contacts are provided by residues Arg-12–Lys-14 and Gly-93–Thr-100. Residues Thr-342–Thr-380 are a coiled coil. The tract at residues Gln-477–Pro-578 is disordered. The segment covering Val-525 to Pro-534 has biased composition (polar residues). Phosphothreonine is present on Thr-530. Composition is skewed to basic and acidic residues over residues Lys-537 to Ser-552 and Ser-561 to Arg-570. Position 546 is a phosphoserine (Ser-546). Positions Leu-658–Leu-690 form a coiled coil.

The protein belongs to the TRAFAC class myosin-kinesin ATPase superfamily. Kinesin family. As to quaternary structure, interacts with HYDIN.

The protein resides in the cytoplasm. Its subcellular location is the cytoskeleton. It is found in the cell projection. It localises to the cilium. The protein localises to the flagellum. The protein resides in the flagellum axoneme. Its function is as follows. Essential for normal male fertility and for progressive motility of spermatozoa. The chain is Kinesin-like protein KIF9 (KIF9) from Homo sapiens (Human).